Consider the following 184-residue polypeptide: Interferon alpha-2 (184 aa).

Residues 1-23 (MALPFSLLMALVVLSCHSSCSLG) form the signal peptide. 2 disulfides stabilise this stretch: Cys24–Cys122 and Cys52–Cys162.

Belongs to the alpha/beta interferon family. As to quaternary structure, interacts with IFNAR2.

The protein localises to the secreted. In terms of biological role, produced by macrophages, IFN-alpha have antiviral activities. This is Interferon alpha-2 from Equus caballus (Horse).